Here is a 153-residue protein sequence, read N- to C-terminus: Ribosome maturation factor RimP (153 aa).

This sequence belongs to the RimP family.

The protein resides in the cytoplasm. Functionally, required for maturation of 30S ribosomal subunits. The sequence is that of Ribosome maturation factor RimP from Vesicomyosocius okutanii subsp. Calyptogena okutanii (strain HA).